The following is a 155-amino-acid chain: 6,7-dimethyl-8-ribityllumazine synthase (155 aa).

5-amino-6-(D-ribitylamino)uracil contacts are provided by residues Trp-22, 56-58 (SYE), and 80-82 (AVI). (2S)-2-hydroxy-3-oxobutyl phosphate is bound at residue 85 to 86 (DT). His-88 serves as the catalytic Proton donor. Phe-113 is a 5-amino-6-(D-ribitylamino)uracil binding site. Residue Arg-127 participates in (2S)-2-hydroxy-3-oxobutyl phosphate binding.

Belongs to the DMRL synthase family.

It carries out the reaction (2S)-2-hydroxy-3-oxobutyl phosphate + 5-amino-6-(D-ribitylamino)uracil = 6,7-dimethyl-8-(1-D-ribityl)lumazine + phosphate + 2 H2O + H(+). The protein operates within cofactor biosynthesis; riboflavin biosynthesis; riboflavin from 2-hydroxy-3-oxobutyl phosphate and 5-amino-6-(D-ribitylamino)uracil: step 1/2. Catalyzes the formation of 6,7-dimethyl-8-ribityllumazine by condensation of 5-amino-6-(D-ribitylamino)uracil with 3,4-dihydroxy-2-butanone 4-phosphate. This is the penultimate step in the biosynthesis of riboflavin. The chain is 6,7-dimethyl-8-ribityllumazine synthase from Deinococcus radiodurans (strain ATCC 13939 / DSM 20539 / JCM 16871 / CCUG 27074 / LMG 4051 / NBRC 15346 / NCIMB 9279 / VKM B-1422 / R1).